The following is a 239-amino-acid chain: tRNA (guanine-N(7)-)-methyltransferase (239 aa).

S-adenosyl-L-methionine is bound by residues Glu69, Glu94, Asp121, and Asp144. The active site involves Asp144. Lys148 contacts substrate. The interaction with RNA stretch occupies residues 150 to 155 (RHNKRR). Residues Asp180 and 217–220 (TKFE) each bind substrate.

This sequence belongs to the class I-like SAM-binding methyltransferase superfamily. TrmB family. In terms of assembly, monomer.

The catalysed reaction is guanosine(46) in tRNA + S-adenosyl-L-methionine = N(7)-methylguanosine(46) in tRNA + S-adenosyl-L-homocysteine. Its pathway is tRNA modification; N(7)-methylguanine-tRNA biosynthesis. In terms of biological role, catalyzes the formation of N(7)-methylguanine at position 46 (m7G46) in tRNA. The chain is tRNA (guanine-N(7)-)-methyltransferase from Klebsiella pneumoniae subsp. pneumoniae (strain ATCC 700721 / MGH 78578).